Here is a 182-residue protein sequence, read N- to C-terminus: UPF0149 protein CGSHiEE_07975 (182 aa).

This sequence belongs to the UPF0149 family.

In Haemophilus influenzae (strain PittEE), this protein is UPF0149 protein CGSHiEE_07975.